A 771-amino-acid polypeptide reads, in one-letter code: Glucocorticoid receptor (771 aa).

The modulating stretch occupies residues 1–415 (MDLKESVTSS…STTTGPPPKL (415 aa)). Phosphothreonine is present on threonine 8. Arginine 22 is modified (omega-N-methylarginine). Phosphoserine is present on residues serine 44, serine 133, serine 199, serine 207, and serine 222. Positions 129–172 (SRSTSVPENPKNSASAVSGTPTEEFPKTQSDLSSEQENLKSQAG) are enriched in polar residues. Residues 129–184 (SRSTSVPENPKNSASAVSGTPTEEFPKTQSDLSSEQENLKSQAGTNGGNVKFPPDQ) form a disordered region. A Glycyl lysine isopeptide (Lys-Gly) (interchain with G-Cter in SUMO2) cross-link involves residue lysine 254. At serine 263 the chain carries Phosphoserine. Residues lysine 273 and lysine 289 each participate in a glycyl lysine isopeptide (Lys-Gly) (interchain with G-Cter in SUMO); alternate cross-link. Glycyl lysine isopeptide (Lys-Gly) (interchain with G-Cter in SUMO2); alternate cross-links involve residues lysine 273 and lysine 289. A phosphoserine mark is found at serine 303 and serine 400. The segment at 390–411 (SSPGLRPDVSSPPSSSSTTTGP) is disordered. Low complexity predominate over residues 400 to 409 (SPPSSSSTTT). Lysine 414 participates in a covalent cross-link: Glycyl lysine isopeptide (Lys-Gly) (interchain with G-Cter in ubiquitin). 2 NR C4-type zinc fingers span residues 416 to 436 (CLVC…CGSC) and 452 to 476 (CAGR…YRKC). Residues 416–481 (CLVCSDELSG…RYRKCLQAGM (66 aa)) constitute a DNA-binding region (nuclear receptor). N6-acetyllysine occurs at positions 475, 487, 489, and 490. The interaction with CLOCK stretch occupies residues 480 to 771 (GMNLQARKTK…DIKKLLFHQK (292 aa)). Residues 482-517 (NLQARKTKKKIKGIQQATTGVSQNTSENPNKTIVPA) are hinge. One can recognise an NR LBD domain in the interval 518 to 752 (TLPQLTPTLV…FPEMLAEIIT (235 aa)). The interval 526 to 691 (LVSLLEVIEP…EIRMTYIKEL (166 aa)) is interaction with CRY1. A Glycyl lysine isopeptide (Lys-Gly) (interchain with G-Cter in SUMO) cross-link involves residue lysine 697.

It belongs to the nuclear hormone receptor family. NR3 subfamily. As to quaternary structure, heteromultimeric cytoplasmic complex with HSP90AA1, HSPA1A/HSPA1B, and FKBP5 or another immunophilin such as PPID, STIP1, or the immunophilin homolog PPP5C. Upon ligand binding FKBP5 dissociates from the complex and FKBP4 takes its place, thereby linking the complex to dynein and mediating transport to the nucleus, where the complex dissociates. Probably forms a complex composed of chaperones HSP90 and HSP70, co-chaperones CDC37, PPP5C, TSC1 and client protein TSC2, CDK4, AKT, RAF1 and NR3C1; this complex does not contain co-chaperones STIP1/HOP and PTGES3/p23. Directly interacts with UNC45A. Binds to DNA as a homodimer, and as heterodimer with NR3C2 or the retinoid X receptor. Binds STAT5A and STAT5B homodimers and heterodimers. Interacts with NRIP1, POU2F1, POU2F2 and TRIM28. Interacts with several coactivator complexes, including the SMARCA4 complex, CREBBP/EP300, TADA2L (Ada complex) and p160 coactivators such as NCOA2 and NCOA6. Interaction with BAG1 inhibits transactivation. Interacts with HEXIM1 and TGFB1I1. Interacts with NCOA1. Interacts with NCOA3, SMARCA4, SMARCC1, SMARCD1, and SMARCE1. Interacts with CLOCK, CRY1 and CRY2 in a ligand-dependent fashion. Interacts with CIART. Interacts with RWDD3. Interacts with UBE2I/UBC9 and this interaction is enhanced in the presence of RWDD3. Interacts with GRIP1. Interacts with NR4A3 (via nuclear receptor DNA-binding domain), represses transcription activity of NR4A3 on the POMC promoter Nur response element (NurRE). Directly interacts with PNRC2 to attract and form a complex with UPF1 and DCP1A; the interaction leads to rapid mRNA degradation. Interacts with GSK3B. Interacts with FNIP1 and FNIP2. Interacts (via C-terminus) with HNRNPU (via C-terminus). Interacts with MCM3AP. Interacts (via domain NR LBD) with HSP90AA1 and HSP90AB1. In the absence of hormonal ligand, interacts with TACC1. Interacts (via NR LBD domain) with ZNF764 (via KRAB domain); the interaction regulates transcription factor activity of NR3C1 by directing its actions toward certain biologic pathways. Post-translationally, acetylation by CLOCK reduces its binding to glucocorticoid response elements and its transcriptional activity. In terms of processing, increased proteasome-mediated degradation in response to glucocorticoids. Phosphorylated in the absence of hormone; becomes hyperphosphorylated in the presence of glucocorticoid. The Ser-199, Ser-222 and Ser-400-phosphorylated forms are mainly cytoplasmic, and the Ser-207-phosphorylated form is nuclear. Phosphorylation at Ser-207 increases transcriptional activity. Phosphorylation at Ser-199, Ser-222 and Ser-400 decreases signaling capacity. Phosphorylation at Ser-400 may protect from glucocorticoid-induced apoptosis. Phosphorylation at Ser-199 and Ser-207 is not required in regulation of chromosome segregation. May be dephosphorylated by PPP5C, attenuates NR3C1 action. Post-translationally, ubiquitinated by UBR5, leading to its degradation: UBR5 specifically recognizes and binds ligand-bound NR3C1 when it is not associated with coactivators (NCOAs). In presence of NCOAs, the UBR5-degron is not accessible, preventing its ubiquitination and degradation. In terms of processing, sumoylation at Lys-273 and Lys-289 negatively regulates its transcriptional activity. Sumoylation at Lys-697 positively regulates its transcriptional activity in the presence of RWDD3. Sumoylation at Lys-273 and Lys-289 is dispensable whereas sumoylation at Lys-697 is critical for the stimulatory effect of RWDD3 on its transcriptional activity. Heat shock increases sumoylation in a RWDD3-dependent manner.

It is found in the cytoplasm. It localises to the nucleus. Its subcellular location is the mitochondrion. The protein localises to the cytoskeleton. The protein resides in the spindle. It is found in the microtubule organizing center. It localises to the centrosome. Its subcellular location is the chromosome. The protein localises to the nucleoplasm. In terms of biological role, receptor for glucocorticoids (GC). Has a dual mode of action: as a transcription factor that binds to glucocorticoid response elements (GRE), both for nuclear and mitochondrial DNA, and as a modulator of other transcription factors. Affects inflammatory responses, cellular proliferation and differentiation in target tissues. Involved in chromatin remodeling. Plays a role in rapid mRNA degradation by binding to the 5' UTR of target mRNAs and interacting with PNRC2 in a ligand-dependent manner which recruits the RNA helicase UPF1 and the mRNA-decapping enzyme DCP1A, leading to RNA decay. Could act as a coactivator for STAT5-dependent transcription upon growth hormone (GH) stimulation and could reveal an essential role of hepatic GR in the control of body growth. Mediates glucocorticoid-induced apoptosis. Promotes accurate chromosome segregation during mitosis. May act as a tumor suppressor. May play a negative role in adipogenesis through the regulation of lipolytic and antilipogenic gene expression. The chain is Glucocorticoid receptor (NR3C1) from Cavia porcellus (Guinea pig).